The primary structure comprises 216 residues: Probable nicotinate-nucleotide adenylyltransferase (216 aa).

It belongs to the NadD family.

The enzyme catalyses nicotinate beta-D-ribonucleotide + ATP + H(+) = deamido-NAD(+) + diphosphate. It participates in cofactor biosynthesis; NAD(+) biosynthesis; deamido-NAD(+) from nicotinate D-ribonucleotide: step 1/1. Catalyzes the reversible adenylation of nicotinate mononucleotide (NaMN) to nicotinic acid adenine dinucleotide (NaAD). The sequence is that of Probable nicotinate-nucleotide adenylyltransferase from Pelobacter propionicus (strain DSM 2379 / NBRC 103807 / OttBd1).